The primary structure comprises 721 residues: Zinc-transporting ATPase (721 aa).

Topologically, residues 1-107 are cytoplasmic; sequence MTQSSPLKTQ…HSHGAGEFNL (107 aa). The HMA domain maps to 8 to 74; it reads KTQQMQVGGM…RIAALGYTLA (67 aa). Zn(2+)-binding residues include Cys-19 and Cys-22. The tract at residues 80–101 is disordered; it reads VTLNGHKHPHSHREEGHSHSHG. The chain crosses the membrane as a helical span at residues 108–128; the sequence is KQELLPVLTAIALFTIAILFE. Topologically, residues 129-140 are extracellular; that stretch reads QPLHNTPGQIAE. A helical membrane pass occupies residues 141–160; that stretch reads FAVIIPAYLLSGWTVLKTAG. At 161–167 the chain is on the cytoplasmic side; it reads RNILRGQ. Residues 168 to 187 form a helical membrane-spanning segment; the sequence is IFDENFLMTIATLGALAIHQ. The Extracellular portion of the chain corresponds to 188–190; it reads LPE. Residues 191 to 210 form a helical membrane-spanning segment; sequence AVAVMLFFRVGELFQEYSVG. Over 211–344 the chain is Cytoplasmic; that stretch reads RSRRSIKALL…ITQFARYYTP (134 aa). A helical membrane pass occupies residues 345–363; it reads VIVFLSLAVALLPPLFIPG. Over 364 to 369 the chain is Extracellular; sequence ADRADW. A helical membrane pass occupies residues 370–387; the sequence is VYRALVLLVISCPCGLVI. Residues 388–671 lie on the Cytoplasmic side of the membrane; it reads SIPLGYFGGI…AIHVARKTRQ (284 aa). Catalysis depends on Asp-425, which acts as the 4-aspartylphosphate intermediate. Mg(2+) is bound by residues Asp-618 and Asp-622. Residues 672 to 693 traverse the membrane as a helical segment; sequence IVVQNIVLALGIKALFIALGTI. Residues 694 to 701 are Extracellular-facing; it reads GLATLWEA. Residues 702 to 717 form a helical membrane-spanning segment; the sequence is VFADVGVALLAILNAT. Residues 718 to 721 lie on the Cytoplasmic side of the membrane; that stretch reads RIAK.

The protein belongs to the cation transport ATPase (P-type) (TC 3.A.3) family. Type IB subfamily.

Its subcellular location is the cell membrane. The catalysed reaction is Zn(2+)(in) + ATP + H2O = Zn(2+)(out) + ADP + phosphate + H(+). In Synechocystis sp. (strain ATCC 27184 / PCC 6803 / Kazusa), this protein is Zinc-transporting ATPase (ziaA).